Reading from the N-terminus, the 117-residue chain is G antigen 12I (117 aa).

Residues 1–117 (MSWRGRSTYY…PEEGEKQSQC (117 aa)) form a disordered region. 2 stretches are compositionally biased toward acidic residues: residues 32 to 45 (FSDEVEPATPEEGE) and 87 to 96 (ECEDGPDGQE). A compositionally biased stretch (basic and acidic residues) spans 103 to 117 (EEVKTPEEGEKQSQC).

It belongs to the GAGE family. Forms tetramers.

The sequence is that of G antigen 12I (GAGE12I) from Homo sapiens (Human).